The following is a 365-amino-acid chain: Protein SGT1 homolog (365 aa).

N-acetylalanine is present on A2. 3 TPR repeats span residues 11-44, 45-78, and 79-112; these read SQRF…KPDD, AQYY…NPNN, and STAM…DIET. The region spanning 169–258 is the CS domain; it reads QSKIKYDWYQ…PEAVRWEKLE (90 aa). T265 carries the post-translational modification Phosphothreonine. Residues 276–365 enclose the SGS domain; that stretch reads LYPSSSPYTR…PPDDMEWKKY (90 aa). Phosphoserine is present on S281. At T284 the chain carries Phosphothreonine. K295 is covalently cross-linked (Glycyl lysine isopeptide (Lys-Gly) (interchain with G-Cter in SUMO1); alternate). Residue K295 forms a Glycyl lysine isopeptide (Lys-Gly) (interchain with G-Cter in SUMO2); alternate linkage. The residue at position 331 (S331) is a Phosphoserine.

It belongs to the SGT1 family. In terms of assembly, probably associates with SCF (SKP1-CUL1-F-box protein) complex through interaction with SKP1. Interacts with S100A6. Interacts with HSP90. Phosphorylated at Ser-281 and Ser-331, dephosphorylation promotes nuclear translocation, most likely due to disruption of the SUGT1-HSP90 complex.

It localises to the cytoplasm. The protein resides in the nucleus. In terms of biological role, may play a role in ubiquitination and subsequent proteasomal degradation of target proteins. This is Protein SGT1 homolog from Homo sapiens (Human).